The sequence spans 145 residues: Synaptojanin-2-binding protein (145 aa).

Topologically, residues 1–117 (MNGRVDYLVS…VHRGDGEPSG (117 aa)) are cytoplasmic. The region spanning 13-100 (EINLTRGPSG…AVSLRVQHRL (88 aa)) is the PDZ domain. A helical transmembrane segment spans residues 118–138 (VPVAVVLLPVFALTLVAVWAF). The Mitochondrial intermembrane segment spans residues 139–145 (VRYRKQL).

Binds (via the PDZ domain) to isoform 2A of SYNJ2 (via the unique motif in the C-terminus). Interacts (via C-terminus) with RALBP1. Interacts (via PDZ domain) with ACVR2A (via C-terminus) and ACVR2B (via C-terminus). Forms a ternary complex with ACVR2A and RALBP1. Interacts with MAPK12. Interacts with DLL1; enhances DLL1 protein stability, and promotes notch signaling in endothelial cells. As to expression, widely expressed.

Its subcellular location is the mitochondrion outer membrane. In terms of biological role, regulates endocytosis of activin type 2 receptor kinases through the Ral/RALBP1-dependent pathway and may be involved in suppression of activin-induced signal transduction. This chain is Synaptojanin-2-binding protein (Synj2bp), found in Rattus norvegicus (Rat).